The sequence spans 127 residues: Gamma-synuclein (127 aa).

Tandem repeats lie at residues 20-30 (EKTKQGVTEAA) and 31-41 (EKTKEGVMYVG). The interval 20–67 (EKTKQGVTEAAEKTKEGVMYVGAKTKEGVVQSVTSVAEKTKEQANAVS) is 4 X 11 AA tandem repeats of [EGSA]-K-T-K-[EQ]-[GQ]-V-X(4). The 3; approximate repeat unit spans residues 42–56 (AKTKEGVVQSVTSVA). The stretch at 57 to 67 (EKTKEQANAVS) is repeat 4. 3 positions are modified to phosphoserine: Ser67, Ser72, and Ser124. A disordered region spans residues 99 to 127 (ALKQPVPSQEDEAAKAEEQVAEETKSGGD). Positions 110–127 (EAAKAEEQVAEETKSGGD) are enriched in basic and acidic residues.

Belongs to the synuclein family. May be a centrosome-associated protein. Interacts with MYOC; affects its secretion and its aggregation. Phosphorylated by BARK1 and GRK5. Predominantly expressed in retina (predominantly in outer nuclear layer, also in inner segment of photoreceptor cells, some individual cells located in the inner nuclear layer, inner plexiform layer and in nerve fiber layer). Also found in brain and heart.

It localises to the cytoplasm. Its subcellular location is the perinuclear region. The protein localises to the cytoskeleton. It is found in the microtubule organizing center. The protein resides in the centrosome. It localises to the spindle. In terms of biological role, plays a role in neurofilament network integrity. May be involved in modulating axonal architecture during development and in the adult. In vitro, increases the susceptibility of neurofilament-H to calcium-dependent proteases. May also function in modulating the keratin network in skin. Activates the MAPK and Elk-1 signal transduction pathway. The chain is Gamma-synuclein (SNCG) from Bos taurus (Bovine).